A 690-amino-acid polypeptide reads, in one-letter code: Proprotein convertase subtilisin/kexin type 9 (690 aa).

Positions 1–28 (MGTVSSRRLWWPLPLLLLLLLGPTGTRA) are cleaved as a signal peptide. The propeptide occupies 29–150 (QEEDDDDYEE…IEEDSSVFAQ (122 aa)). Tyr-36 carries the post-translational modification Sulfotyrosine. Ser-45 bears the Phosphoserine mark. One can recognise an Inhibitor I9 domain in the interval 75–147 (TYVVVLKEET…VDYIEEDSSV (73 aa)). The Peptidase S8 domain maps to 153-459 (PWNLERITPA…GWQLFCRTVW (307 aa)). Active-site charge relay system residues include Asp-184 and His-224. 2 cysteine pairs are disulfide-bonded: Cys-221–Cys-253 and Cys-321–Cys-356. Ser-384 serves as the catalytic Charge relay system. A C-terminal domain region spans residues 448-690 (GAGWQLFCRT…HLAQASQELQ (243 aa)). Disulfide bonds link Cys-455–Cys-525, Cys-475–Cys-524, and Cys-484–Cys-507. Asn-531 carries N-linked (GlcNAc...) asparagine glycosylation. 6 cysteine pairs are disulfide-bonded: Cys-532–Cys-599, Cys-550–Cys-598, Cys-560–Cys-586, Cys-606–Cys-677, Cys-624–Cys-676, and Cys-633–Cys-652. At Ser-686 the chain carries Phosphoserine.

Belongs to the peptidase S8 family. As to quaternary structure, monomer. Can self-associate to form dimers and higher multimers which may have increased LDLR degrading activity. The precursor protein but not the mature protein may form multimers. Interacts with APOB, VLDLR, LRP8/APOER2 and BACE1. The full-length immature form (pro-PCSK9) interacts with SCNN1A, SCNN1B and SCNN1G. The pro-PCSK9 form (via C-terminal domain) interacts with LDLR. Interacts (via the C-terminal domain) with ANXA2 (via repeat Annexin 1); the interaction inhibits the degradation of LDLR. It depends on Ca(2+) as a cofactor. In terms of processing, cleavage by furin and PCSK5 generates a truncated inactive protein that is unable to induce LDLR degradation. Post-translationally, undergoes autocatalytic cleavage in the endoplasmic reticulum to release the propeptide from the N-terminus and the cleavage of the propeptide is strictly required for its maturation and activation. The cleaved propeptide however remains associated with the catalytic domain through non-covalent interactions, preventing potential substrates from accessing its active site. As a result, it is secreted from cells as a propeptide-containing, enzymatically inactive protein. Phosphorylation protects the propeptide against proteolysis.

It is found in the cytoplasm. It localises to the secreted. The protein localises to the endosome. Its subcellular location is the lysosome. The protein resides in the cell surface. It is found in the endoplasmic reticulum. It localises to the golgi apparatus. Its activity is regulated as follows. Its proteolytic activity is autoinhibited by the non-covalent binding of the propeptide to the catalytic domain. Inhibited by EGTA. Its function is as follows. Crucial player in the regulation of plasma cholesterol homeostasis. Binds to low-density lipid receptor family members: low density lipoprotein receptor (LDLR), very low density lipoprotein receptor (VLDLR), apolipoprotein E receptor (LRP1/APOER) and apolipoprotein receptor 2 (LRP8/APOER2), and promotes their degradation in intracellular acidic compartments. Acts via a non-proteolytic mechanism to enhance the degradation of the hepatic LDLR through a clathrin LDLRAP1/ARH-mediated pathway. May prevent the recycling of LDLR from endosomes to the cell surface or direct it to lysosomes for degradation. Can induce ubiquitination of LDLR leading to its subsequent degradation. Inhibits intracellular degradation of APOB via the autophagosome/lysosome pathway in a LDLR-independent manner. Involved in the disposal of non-acetylated intermediates of BACE1 in the early secretory pathway. Inhibits epithelial Na(+) channel (ENaC)-mediated Na(+) absorption by reducing ENaC surface expression primarily by increasing its proteasomal degradation. Regulates neuronal apoptosis via modulation of LRP8/APOER2 levels and related anti-apoptotic signaling pathways. The chain is Proprotein convertase subtilisin/kexin type 9 (PCSK9) from Callithrix jacchus (White-tufted-ear marmoset).